The following is a 214-amino-acid chain: MGRRPARCYRYCKNKPYPKSRFCRGVPDAKIRIFDLGRKKAKVDEFPLCGHMVSDEYEQLSSEALEAARICANKYMVKSCGRDGFHMRVRLHPFHVIRINKMLSCAGADRLQTGMRGAFGKPQGTVARVHIGQVIMSIRTKLQNKEHVIEALRRAKFKFPGRQKIHISKKWGFTKFNADEFEDMVAKKRLIPDGCGVKYVPSHGPLDKWRVLHS.

This sequence belongs to the universal ribosomal protein uL16 family. In terms of assembly, component of the 60S large ribosomal subunit (LSU).

It localises to the cytoplasm. Functionally, testis-specific component of the ribosome, which is required for the transition from prophase to metaphase in male meiosis I. Compensates for the inactivated X-linked RPL10 paralog during spermatogenesis. The ribosome is a large ribonucleoprotein complex responsible for the synthesis of proteins in the cell. The small ribosomal subunit (SSU) binds messenger RNAs (mRNAs) and translates the encoded message by selecting cognate aminoacyl-transfer RNA (tRNA) molecules. The large subunit (LSU) contains the ribosomal catalytic site termed the peptidyl transferase center (PTC), which catalyzes the formation of peptide bonds, thereby polymerizing the amino acids delivered by tRNAs into a polypeptide chain. The nascent polypeptides leave the ribosome through a tunnel in the LSU and interact with protein factors that function in enzymatic processing, targeting, and the membrane insertion of nascent chains at the exit of the ribosomal tunnel. The polypeptide is Large ribosomal subunit protein uL16-like (RPL10L) (Macaca fascicularis (Crab-eating macaque)).